Reading from the N-terminus, the 113-residue chain is ATP-dependent Clp protease adapter protein ClpS (113 aa).

The span at 1 to 11 (MTRPTIPPGPP) shows a compositional bias: pro residues. Disordered regions lie at residues 1–24 (MTRPTIPPGPPGAEGRTQTLERTE) and 92–113 (TAHAQREGHPLRVVAEPESEGE).

It belongs to the ClpS family. In terms of assembly, binds to the N-terminal domain of the chaperone ClpA.

Functionally, involved in the modulation of the specificity of the ClpAP-mediated ATP-dependent protein degradation. The protein is ATP-dependent Clp protease adapter protein ClpS of Deinococcus radiodurans (strain ATCC 13939 / DSM 20539 / JCM 16871 / CCUG 27074 / LMG 4051 / NBRC 15346 / NCIMB 9279 / VKM B-1422 / R1).